A 1232-amino-acid polypeptide reads, in one-letter code: Pyruvate:ferredoxin oxidoreductase (1232 aa).

T31 serves as a coordination point for pyruvate. E64 is a thiamine diphosphate binding site. R114 contacts pyruvate. Residues 427–431 (ADGTV), K459, N560, and N602 each bind CoA. 2 4Fe-4S ferredoxin-type domains span residues 680–709 (NVPQ…PVLA) and 736–767 (FRIQ…MQPL). Positions 689, 692, 695, 699, 745, 748, 751, 755, 812, and 815 each coordinate [4Fe-4S] cluster. Thiamine diphosphate contacts are provided by residues E817, C840, and 962-965 (GDGW). Residue C840 participates in [4Fe-4S] cluster binding. D963 contributes to the Mg(2+) binding site. D983 and N985 together coordinate Ca(2+). T991 and V993 together coordinate Mg(2+). A thiamine diphosphate-binding site is contributed by 991–996 (TEVYSN). The Ca(2+) site is built by A1056, F1059, G1061, and S1063. C1071 is a [4Fe-4S] cluster binding site. Cysteines 1195 and 1212 form a disulfide. A disordered region spans residues 1197–1232 (RDDTPMMARPDSGEACDQNRAGTSEQQGDLSKRTKK). Over residues 1216-1225 (RAGTSEQQGD) the composition is skewed to polar residues.

Belongs to the pyruvate:ferredoxin/flavodoxin oxidoreductase family. As to quaternary structure, homodimer. Requires [4Fe-4S] cluster as cofactor. The cofactor is thiamine diphosphate. Mg(2+) serves as cofactor.

Its subcellular location is the cytoplasm. The catalysed reaction is 2 oxidized [2Fe-2S]-[ferredoxin] + pyruvate + CoA = 2 reduced [2Fe-2S]-[ferredoxin] + acetyl-CoA + CO2 + H(+). In terms of biological role, catalyzes the ferredoxin-dependent oxidative decarboxylation of pyruvate. Required for the transfer of electrons from pyruvate to ferredoxin. Ferredoxin I and ferredoxin II, which are single 4Fe-4S cluster ferredoxins are the most effective electron carriers of POR. The sequence is that of Pyruvate:ferredoxin oxidoreductase from Desulfocurvibacter africanus (Desulfovibrio africanus).